The primary structure comprises 148 residues: Receptor activity-modifying protein 1 (148 aa).

Residues 1–26 (MAPGLRGLPRRGLWLLLAHHLFMVTA) form the signal peptide. 3 disulfide bridges follow: cysteine 27/cysteine 82, cysteine 40/cysteine 72, and cysteine 57/cysteine 104. Residues 27–118 (CRDPDYGTLI…RALRDPPNSI (92 aa)) lie on the Extracellular side of the membrane. Residues 119 to 140 (LCPFIVLPITVTLLMTALVVWR) form a helical membrane-spanning segment. The Cytoplasmic portion of the chain corresponds to 141–148 (SKRTEGIV).

This sequence belongs to the RAMP family. Heterodimer of CALCRL and RAMP1; the interaction induces allosteric modulation of CALCRL function and CGRP1/CALCA and CGRP2/CALCB ligand specificity. Heterodimer of CALCR and RAMP1; interaction forms the AMYR1 receptor complex for amylin/IAPP and CGRP1/CALCA ligands.

Its subcellular location is the cell membrane. Accessory protein that interacts with and modulates the function of G-protein coupled receptors including calcitonin gene-related peptide type 1 receptor (CALCRL) and calcitonin receptor (CALCR). Required for the transport of CALCRL to the plasma membrane. Together with CALCRL, form the receptor complex for the calcitonin gene-related peptides CGRP1/CALCA and CGRP2/CALCB. Together with CALCR, form the AMYR1 receptor complex for amylin/IAPP and CGRP1/CALCA. In Rattus norvegicus (Rat), this protein is Receptor activity-modifying protein 1.